The following is a 228-amino-acid chain: uncharacterized protein (228 aa).

A signal peptide spans 1-15 (MKQKYLFIASMALAG). Cysteine 16 carries N-palmitoyl cysteine lipidation. A lipid anchor (S-diacylglycerol cysteine) is attached at cysteine 16.

This sequence to P.multocida PM0015.

It localises to the cell membrane. This is an uncharacterized protein from Pasteurella multocida (strain Pm70).